Reading from the N-terminus, the 195-residue chain is Imidazoleglycerol-phosphate dehydratase (195 aa).

This sequence belongs to the imidazoleglycerol-phosphate dehydratase family.

It is found in the cytoplasm. It carries out the reaction D-erythro-1-(imidazol-4-yl)glycerol 3-phosphate = 3-(imidazol-4-yl)-2-oxopropyl phosphate + H2O. It functions in the pathway amino-acid biosynthesis; L-histidine biosynthesis; L-histidine from 5-phospho-alpha-D-ribose 1-diphosphate: step 6/9. This chain is Imidazoleglycerol-phosphate dehydratase, found in Citrifermentans bemidjiense (strain ATCC BAA-1014 / DSM 16622 / JCM 12645 / Bem) (Geobacter bemidjiensis).